The chain runs to 176 residues: Urease accessory protein UreE (176 aa).

Residues 134-176 (FTPEGGAYGHGRTHAHEHGHTNHHGQHHDHADHGHSHDHSHDQ) form a disordered region. Basic and acidic residues predominate over residues 161-176 (HDHADHGHSHDHSHDQ).

It belongs to the UreE family.

The protein resides in the cytoplasm. Functionally, involved in urease metallocenter assembly. Binds nickel. Probably functions as a nickel donor during metallocenter assembly. The polypeptide is Urease accessory protein UreE (Ruegeria sp. (strain TM1040) (Silicibacter sp.)).